A 408-amino-acid polypeptide reads, in one-letter code: Peptidase T (408 aa).

Histidine 78 contributes to the Zn(2+) binding site. Aspartate 80 is a catalytic residue. Aspartate 141 lines the Zn(2+) pocket. Catalysis depends on glutamate 175, which acts as the Proton acceptor. Zn(2+)-binding residues include glutamate 176, aspartate 198, and histidine 380.

Belongs to the peptidase M20B family. It depends on Zn(2+) as a cofactor.

It localises to the cytoplasm. It carries out the reaction Release of the N-terminal residue from a tripeptide.. Functionally, cleaves the N-terminal amino acid of tripeptides. This is Peptidase T from Halothermothrix orenii (strain H 168 / OCM 544 / DSM 9562).